The following is a 486-amino-acid chain: Malonate-semialdehyde dehydrogenase 2 (486 aa).

Positions 154, 178, 181, 182, and 231 each coordinate NAD(+). Residue C286 is the Nucleophile of the active site. E385 is an NAD(+) binding site.

The protein belongs to the aldehyde dehydrogenase family. IolA subfamily. Homotetramer.

It catalyses the reaction 3-oxopropanoate + NAD(+) + CoA + H2O = hydrogencarbonate + acetyl-CoA + NADH + H(+). The catalysed reaction is 2-methyl-3-oxopropanoate + NAD(+) + CoA + H2O = propanoyl-CoA + hydrogencarbonate + NADH + H(+). It participates in polyol metabolism; myo-inositol degradation into acetyl-CoA; acetyl-CoA from myo-inositol: step 7/7. Functionally, catalyzes the oxidation of malonate semialdehyde (MSA) and methylmalonate semialdehyde (MMSA) into acetyl-CoA and propanoyl-CoA, respectively. Is involved in a myo-inositol catabolic pathway. Bicarbonate, and not CO2, is the end-product of the enzymatic reaction. The sequence is that of Malonate-semialdehyde dehydrogenase 2 from Shouchella clausii (strain KSM-K16) (Alkalihalobacillus clausii).